A 371-amino-acid polypeptide reads, in one-letter code: Probable tRNA sulfurtransferase (371 aa).

In terms of domain architecture, THUMP spans 54–156 (NANIEALSEV…NEMTYFYHKV (103 aa)). ATP-binding positions include 174–175 (LF), 199–200 (NF), lysine 254, glycine 276, and glutamine 285.

The protein belongs to the ThiI family.

It is found in the cytoplasm. The catalysed reaction is [ThiI sulfur-carrier protein]-S-sulfanyl-L-cysteine + a uridine in tRNA + 2 reduced [2Fe-2S]-[ferredoxin] + ATP + H(+) = [ThiI sulfur-carrier protein]-L-cysteine + a 4-thiouridine in tRNA + 2 oxidized [2Fe-2S]-[ferredoxin] + AMP + diphosphate. The enzyme catalyses [ThiS sulfur-carrier protein]-C-terminal Gly-Gly-AMP + S-sulfanyl-L-cysteinyl-[cysteine desulfurase] + AH2 = [ThiS sulfur-carrier protein]-C-terminal-Gly-aminoethanethioate + L-cysteinyl-[cysteine desulfurase] + A + AMP + 2 H(+). It functions in the pathway cofactor biosynthesis; thiamine diphosphate biosynthesis. Functionally, catalyzes the ATP-dependent transfer of a sulfur to tRNA to produce 4-thiouridine in position 8 of tRNAs, which functions as a near-UV photosensor. Also catalyzes the transfer of sulfur to the sulfur carrier protein ThiS, forming ThiS-thiocarboxylate. This is a step in the synthesis of thiazole, in the thiamine biosynthesis pathway. The sulfur is donated as persulfide by IscS. The sequence is that of Probable tRNA sulfurtransferase from Saccharolobus solfataricus (strain ATCC 35092 / DSM 1617 / JCM 11322 / P2) (Sulfolobus solfataricus).